A 272-amino-acid polypeptide reads, in one-letter code: Large ribosomal subunit protein uL4 (272 aa).

The protein belongs to the universal ribosomal protein uL4 family. Part of the 50S ribosomal subunit.

One of the primary rRNA binding proteins, this protein initially binds near the 5'-end of the 23S rRNA. It is important during the early stages of 50S assembly. It makes multiple contacts with different domains of the 23S rRNA in the assembled 50S subunit and ribosome. In terms of biological role, forms part of the polypeptide exit tunnel. This Aeropyrum pernix (strain ATCC 700893 / DSM 11879 / JCM 9820 / NBRC 100138 / K1) protein is Large ribosomal subunit protein uL4.